Consider the following 482-residue polypeptide: FAD-dependent monooxygenase esdpE (482 aa).

An N-terminal signal peptide occupies residues Met1–Ala21. Residues Glu35 and Arg108 each coordinate FAD. Asn243 carries N-linked (GlcNAc...) asparagine glycosylation. Residues Asp308 and Ala321 each coordinate FAD. The chain crosses the membrane as a helical span at residues Leu440–Trp460.

It belongs to the paxM FAD-dependent monooxygenase family. It depends on FAD as a cofactor.

Its subcellular location is the membrane. It participates in secondary metabolite biosynthesis; terpenoid biosynthesis. Functionally, FAD-dependent monooxygenase; part of the cluster that mediates the biosynthesis of shearones, diterpenoid pyrones (DPs) which are structurally diverse meroterpenoids consisting of a diterpene linked by a pyrone, and which may exhibit a range of bioactivities. Within the pathway, esdpE takes part to the biosynthesis of the molecular scaffold by catalyzing the formation of an (S)-epoxide ring at the terminal olefin of the geranylgeranyl group. The molecular scaffold is commonly biosynthesized by a series of enzymes including the non-reducing polyketide synthase (NR-PKS) esdpA that generates an alpha-pyrone; the prenyltransferase esdpC that attaches a geranylgeranyl pyrophosphate (GGPP) produced by the GGPP synthase (GGPPS) esdpD onto the pyrone unit; the FAD-dependent monooxygenase esdpE that converts an olefin on the diterpene unit into an epoxide; and the terpene cyclase esdpB that catalyzes the cyclization reactions to give the molecular backbone shearone A. In the modification steps, esdpF oxidizes the hydroxy group to a ketone at C-3 and esdpG then attaches hydroxy groups at both C-11 and C-12. After that, esdpI hydroxylates at C-20 and esdpH hydroxylates at C-6'. The ether bridge is generated by nucleophilic attack of the hydroxy group at C-20 to the carbonyl carbon at C-3. EsdpH can also functions prior to esdpI. The different combinations of these modification enzymes lead to the production of diverse shearone derivatives, shearone I being the end product of the pathway. The alpha-ketoglutarate-dependent dioxygenase esdpJ seems not to be involved in this pathway. The polypeptide is FAD-dependent monooxygenase esdpE (Penicillium shearii (Eupenicillium shearii)).